A 477-amino-acid polypeptide reads, in one-letter code: Putative BTB/POZ domain-containing protein R830 (477 aa).

The 71-residue stretch at S13–P83 folds into the BTB domain.

Belongs to the mimivirus BTB/WD family.

The chain is Putative BTB/POZ domain-containing protein R830 from Acanthamoeba polyphaga mimivirus (APMV).